The following is a 320-amino-acid chain: Cytochrome c biogenesis protein CcsA (320 aa).

The next 8 helical transmembrane spans lie at Ile-13–Val-33, Gly-46–Gly-66, Leu-73–Leu-93, Leu-102–Leu-122, Met-147–Ile-167, Ile-226–Asn-246, Glu-259–His-274, and Val-289–Ile-309.

Belongs to the CcmF/CycK/Ccl1/NrfE/CcsA family. As to quaternary structure, may interact with Ccs1.

The protein localises to the plastid. The protein resides in the chloroplast thylakoid membrane. In terms of biological role, required during biogenesis of c-type cytochromes (cytochrome c6 and cytochrome f) at the step of heme attachment. This is Cytochrome c biogenesis protein CcsA from Gossypium hirsutum (Upland cotton).